Consider the following 484-residue polypeptide: Protein nucleotidyltransferase YdiU (484 aa).

The ATP site is built by Gly-87, Gly-89, Arg-90, Lys-110, Asp-122, Gly-123, Arg-173, and Arg-180. Asp-249 acts as the Proton acceptor in catalysis. Residues Asn-250 and Asp-259 each contribute to the Mg(2+) site. Asp-259 is an ATP binding site.

Belongs to the SELO family. Mg(2+) serves as cofactor. Requires Mn(2+) as cofactor.

It catalyses the reaction L-seryl-[protein] + ATP = 3-O-(5'-adenylyl)-L-seryl-[protein] + diphosphate. The catalysed reaction is L-threonyl-[protein] + ATP = 3-O-(5'-adenylyl)-L-threonyl-[protein] + diphosphate. The enzyme catalyses L-tyrosyl-[protein] + ATP = O-(5'-adenylyl)-L-tyrosyl-[protein] + diphosphate. It carries out the reaction L-histidyl-[protein] + UTP = N(tele)-(5'-uridylyl)-L-histidyl-[protein] + diphosphate. It catalyses the reaction L-seryl-[protein] + UTP = O-(5'-uridylyl)-L-seryl-[protein] + diphosphate. The catalysed reaction is L-tyrosyl-[protein] + UTP = O-(5'-uridylyl)-L-tyrosyl-[protein] + diphosphate. Functionally, nucleotidyltransferase involved in the post-translational modification of proteins. It can catalyze the addition of adenosine monophosphate (AMP) or uridine monophosphate (UMP) to a protein, resulting in modifications known as AMPylation and UMPylation. This Lachnoclostridium phytofermentans (strain ATCC 700394 / DSM 18823 / ISDg) (Clostridium phytofermentans) protein is Protein nucleotidyltransferase YdiU.